We begin with the raw amino-acid sequence, 422 residues long: PHAF1 protein T01G9.2 (422 aa).

The protein belongs to the PHAF1 family.

It is found in the cytoplasm. Its subcellular location is the preautophagosomal structure. In terms of biological role, may play a regulatory role in autophagic activity. This chain is PHAF1 protein T01G9.2, found in Caenorhabditis elegans.